The sequence spans 1074 residues: Insulin receptor substrate 2-A (1074 aa).

The interval 1-64 (MAGVLCPTEE…PPASAAEDDV (64 aa)) is disordered. 2 consecutive short sequence motifs (YXXM motif) follow at residues 33-36 (YRRM) and 145-148 (YFAM). A PH domain is found at 63-168 (DVRKRGYLRK…WYQALSELIN (106 aa)). The 105-residue stretch at 193–297 (FKEVWQVNVK…DTMKALKAYS (105 aa)) folds into the IRS-type PTB domain. Disordered regions lie at residues 326–370 (PPSQ…RPFR), 426–461 (CSSS…SDEY), and 475–510 (SNTP…SRDD). Positions 347–361 (SAKNNSFRFRTSSEG) are enriched in polar residues. 2 stretches are compositionally biased toward low complexity: residues 426–435 (CSSSGHGSAS) and 442–454 (SSSS…SDGG). Polar residues predominate over residues 475-504 (SNTPDSLGNTPPIQEENTLSDYMSMSTHSQ). 6 short sequence motifs (YXXM motif) span residues 496–499 (YMSM), 592–595 (YMPM), 605–608 (YLPM), 631–634 (YMMM), 663–666 (YMDM), and 710–713 (YVPM). Positions 801–821 (TPYSLSADGSPSSLGSSCDHR) are disordered. Positions 804–817 (SLSADGSPSSLGSS) are enriched in low complexity. The short motif at 888-891 (YTTM) is the YXXM motif 9 element.

In terms of processing, phosphorylated by INSR.

Functionally, potentiates insulin signaling. The chain is Insulin receptor substrate 2-A (irs2-a) from Xenopus laevis (African clawed frog).